A 253-amino-acid polypeptide reads, in one-letter code: CTP:phosphoglutamine cytidylyltransferase (253 aa).

The catalysed reaction is N(5)-phospho-L-glutamine + CTP + H(+) = N(5)-(cytidine 5'-diphosphoramidyl)-L-glutamine + diphosphate. It functions in the pathway capsule biogenesis; capsule polysaccharide biosynthesis. In terms of biological role, involved in the biosynthesis of the O-methyl phosphoramidate (MeOPN) group found on the capsular polysaccharide (CPS) of C.jejuni. Catalyzes the formation of CDP-L-glutamine from CTP and L-glutamine phosphate. In the presence of MnCTP, catalyzes the displacement of pyrophosphate from CTP using phosphoramidate, methyl phosphate, methyl phosphonate, phosphate, arsenate, ethanolamine phosphate, (R/S)-glycerol-1-phosphate, glycerol-2-phosphate, serinol phosphate, L-serine phosphate and 3-phospho-D-glycerate as substrate in addition to L-glutamine phosphate. The chain is CTP:phosphoglutamine cytidylyltransferase from Campylobacter jejuni subsp. jejuni serotype O:2 (strain ATCC 700819 / NCTC 11168).